Here is a 122-residue protein sequence, read N- to C-terminus: Large ribosomal subunit protein uL14 (122 aa).

The protein belongs to the universal ribosomal protein uL14 family. Part of the 50S ribosomal subunit. Forms a cluster with proteins L3 and L19. In the 70S ribosome, L14 and L19 interact and together make contacts with the 16S rRNA in bridges B5 and B8.

Functionally, binds to 23S rRNA. Forms part of two intersubunit bridges in the 70S ribosome. In Afipia carboxidovorans (strain ATCC 49405 / DSM 1227 / KCTC 32145 / OM5) (Oligotropha carboxidovorans), this protein is Large ribosomal subunit protein uL14.